A 144-amino-acid chain; its full sequence is TSC22 domain family protein 1 (144 aa).

A leucine-zipper region spans residues 77-98; the sequence is LKEQIKELIEKNSQLEQENNLL. Positions 109–144 are disordered; that stretch reads QFQAQLQTGSPPATTQPQGTTQPPAQPASQGSGPTA. Low complexity predominate over residues 115–144; it reads QTGSPPATTQPQGTTQPPAQPASQGSGPTA.

This sequence belongs to the TSC-22/Dip/Bun family. In terms of assembly, forms homodimers. Forms a heterodimer with TSC22D4/THG1. Interacts with histone H1-2. Interacts with GNL3.

It localises to the cytoplasm. The protein localises to the nucleus. In terms of biological role, transcriptional repressor. Plays a role in the repression of hematopoietic precursor cell growth. Promotes IL2 deprivation-induced apoptosis in T-lymphocytes, via repression of TSC22D3/GILZ transcription and activation of the caspase cascade. Positively regulates cell death in response to TGFB3 during mammary gland involution. This chain is TSC22 domain family protein 1, found in Bos taurus (Bovine).